The following is a 378-amino-acid chain: SWI/SNF-related matrix-associated actin-dependent regulator of chromatin subfamily B member 1 (378 aa).

Residues Met-1–Ser-106 are DNA-binding.

The protein belongs to the SNF5 family. Component of the multiprotein chromatin-remodeling complexes SWI/SNF. Component of neural progenitors-specific chromatin remodeling complex (npBAF complex) and the neuron-specific chromatin remodeling complex (nBAF complex). Component of the BAF (SWI/SNF) chromatin remodeling complex. Component of the SWI/SNF-B (PBAF) chromatin remodeling complex. Binds to double-stranded DNA.

It localises to the nucleus. Its function is as follows. Involved in chromatin-remodeling. Core component of the BAF (SWI/SNF) complex. This ATP-dependent chromatin-remodeling complex plays important roles in cell proliferation and differentiation, in cellular antiviral activities and inhibition of tumor formation. Belongs to the neural progenitors-specific chromatin remodeling complex (npBAF complex) and the neuron-specific chromatin remodeling complex (nBAF complex) and may play a role in neural development. In Xenopus laevis (African clawed frog), this protein is SWI/SNF-related matrix-associated actin-dependent regulator of chromatin subfamily B member 1 (smarcb1).